An 874-amino-acid polypeptide reads, in one-letter code: Alanine--tRNA ligase (874 aa).

The Zn(2+) site is built by histidine 562, histidine 566, cysteine 664, and histidine 668.

This sequence belongs to the class-II aminoacyl-tRNA synthetase family. Zn(2+) is required as a cofactor.

The protein localises to the cytoplasm. The enzyme catalyses tRNA(Ala) + L-alanine + ATP = L-alanyl-tRNA(Ala) + AMP + diphosphate. Its function is as follows. Catalyzes the attachment of alanine to tRNA(Ala) in a two-step reaction: alanine is first activated by ATP to form Ala-AMP and then transferred to the acceptor end of tRNA(Ala). Also edits incorrectly charged Ser-tRNA(Ala) and Gly-tRNA(Ala) via its editing domain. The protein is Alanine--tRNA ligase of Shewanella sp. (strain MR-7).